Consider the following 337-residue polypeptide: Deoxyhypusine hydroxylase (337 aa).

2 HEAT-like PBS-type repeats span residues 73–99 (LKHE…VLSD) and 106–132 (CRHE…YRDR). The Fe cation site is built by histidine 75, glutamate 76, histidine 108, and glutamate 109. Basic and acidic residues predominate over residues 156-165 (AERQKEKLRP). The tract at residues 156–183 (AERQKEKLRPSDFASIDPAPPMPESDKE) is disordered. 3 HEAT-like PBS-type repeats span residues 202 to 235 (SRYR…GLSD), 240 to 266 (FRHE…ALSN), and 273 to 300 (VRHE…FLHD). Fe cation-binding residues include histidine 242, glutamate 243, histidine 275, and glutamate 276.

It belongs to the deoxyhypusine hydroxylase family. It depends on Fe(2+) as a cofactor.

The protein resides in the cytoplasm. It is found in the nucleus. It carries out the reaction [eIF5A protein]-deoxyhypusine + AH2 + O2 = [eIF5A protein]-hypusine + A + H2O. It participates in protein modification; eIF5A hypusination. Catalyzes the hydroxylation of the N(6)-(4-aminobutyl)-L-lysine intermediate to form hypusine, an essential post-translational modification only found in mature eIF-5A factor. This Gibberella zeae (strain ATCC MYA-4620 / CBS 123657 / FGSC 9075 / NRRL 31084 / PH-1) (Wheat head blight fungus) protein is Deoxyhypusine hydroxylase.